Here is a 130-residue protein sequence, read N- to C-terminus: Small ribosomal subunit protein uS9 (130 aa).

Residues valine 111–arginine 130 form a disordered region. Residues valine 116–arginine 130 are compositionally biased toward basic residues.

It belongs to the universal ribosomal protein uS9 family.

The sequence is that of Small ribosomal subunit protein uS9 from Xylella fastidiosa (strain M23).